The primary structure comprises 835 residues: Protein translocase subunit SecA (835 aa).

ATP contacts are provided by residues glutamine 85, 103–107, and aspartate 492; that span reads GEGKT. Cysteine 819, cysteine 821, cysteine 830, and cysteine 831 together coordinate Zn(2+).

Belongs to the SecA family. As to quaternary structure, monomer and homodimer. Part of the essential Sec protein translocation apparatus which comprises SecA, SecYEG and auxiliary proteins SecDF. Other proteins may also be involved. Zn(2+) is required as a cofactor.

The protein localises to the cell membrane. Its subcellular location is the cytoplasm. The catalysed reaction is ATP + H2O + cellular proteinSide 1 = ADP + phosphate + cellular proteinSide 2.. In terms of biological role, part of the Sec protein translocase complex. Interacts with the SecYEG preprotein conducting channel. Has a central role in coupling the hydrolysis of ATP to the transfer of proteins into and across the cell membrane, serving as an ATP-driven molecular motor driving the stepwise translocation of polypeptide chains across the membrane. The polypeptide is Protein translocase subunit SecA (Clostridium botulinum (strain Okra / Type B1)).